Here is a 367-residue protein sequence, read N- to C-terminus: PR domain zinc finger protein 12 (367 aa).

The 118-residue stretch at 86–203 (AEVIIAQSSI…PDQELLVWYG (118 aa)) folds into the SET domain. 3 C2H2-type zinc fingers span residues 243–265 (MRCV…MRIH), 271–293 (FVCR…VRLH), and 299–323 (YKCQ…SARH). Positions 318-337 (QKSARHRPPSTALQAHSPAL) are disordered.

This sequence belongs to the class V-like SAM-binding methyltransferase superfamily. As to quaternary structure, interacts with EHMT2. Not found in adult tissues except in dorsal root ganglia.

It is found in the nucleus. Its function is as follows. Transcriptional regulator necessary for the development of nociceptive neurons, playing a key role in determining the nociceptive lineage from neural crest cell progenitors. Initiates neurogenesis and activates downstream pro-neuronal transcription factors, such as NEUROD1, BRN3A, and ISL1, specifically within nociceptive neurons, while repressing non-nociceptor cell fates. Essential for the proper function of nociceptors in adults, influencing both their excitability and their gene expression, thereby impacting how these neurons respond to various pain stimuli. The sequence is that of PR domain zinc finger protein 12 (PRDM12) from Homo sapiens (Human).